The following is a 117-amino-acid chain: Multidrug resistance protein EbrB (117 aa).

The next 4 helical transmembrane spans lie at 3–23, 31–51, 59–79, and 81–101; these read GLLYLALAIVSEVFGSTMLKL, WPIGGVIAGFLSAFTFLSFSL, AYATWSGVGTALTAIVGFLLF, and ETISLKGVFGLTLVIAGVVVL.

The protein belongs to the drug/metabolite transporter (DMT) superfamily. Small multidrug resistance (SMR) (TC 2.A.7.1) family. EbrA/EbrB subfamily. In terms of assembly, the efflux pump is composed of EbrA and EbrB.

It localises to the cell membrane. Functionally, part of a multidrug efflux pump. Confers resistance to cationic lipophilic dyes such as ethidium bromide, acriflavine, pyronine Y and safranin O. The efflux is probably coupled to an influx of protons. The polypeptide is Multidrug resistance protein EbrB (ebrB) (Bacillus atrophaeus).